The following is a 265-amino-acid chain: MKTTTMSQLRQWKQEKRKFATLTAYDASFAQLFAEQGIQVLLVGDSLGMTLQGFDSTLPVTVADMAYHTRAVRRGAPHCLLLADMPFMSYATPELAFTHAAELMRAGANMVKLEGGSWLCDTIRMLAERAVPVCGHLGLTPQSVNIFGGYKVQGREEVAANQLLQDAIALEQAGAQLLVLECVPVELAQRVTEELTIPVIGIGAGNVTDGQILVMHDALGITGGHTPKFSKNFLAHSAGDIRAAIKLYIEEVEGGIYPAEEHTFQ.

Residues aspartate 45 and aspartate 84 each contribute to the Mg(2+) site. 3-methyl-2-oxobutanoate contacts are provided by residues 45–46 (DS), aspartate 84, and lysine 112. Glutamate 114 contributes to the Mg(2+) binding site. Glutamate 181 functions as the Proton acceptor in the catalytic mechanism.

This sequence belongs to the PanB family. In terms of assembly, homodecamer; pentamer of dimers. Mg(2+) is required as a cofactor.

Its subcellular location is the cytoplasm. It carries out the reaction 3-methyl-2-oxobutanoate + (6R)-5,10-methylene-5,6,7,8-tetrahydrofolate + H2O = 2-dehydropantoate + (6S)-5,6,7,8-tetrahydrofolate. The protein operates within cofactor biosynthesis; (R)-pantothenate biosynthesis; (R)-pantoate from 3-methyl-2-oxobutanoate: step 1/2. In terms of biological role, catalyzes the reversible reaction in which hydroxymethyl group from 5,10-methylenetetrahydrofolate is transferred onto alpha-ketoisovalerate to form ketopantoate. The chain is 3-methyl-2-oxobutanoate hydroxymethyltransferase from Yersinia pestis bv. Antiqua (strain Antiqua).